The sequence spans 956 residues: DNA replication helicase (956 aa).

An ATP-binding site is contributed by 120-127 (GTAGAGKT). The segment at 658–694 (PINNHVDADSSQGGQSVPVSQRMEHGQEETHDIPCLS) is disordered. Residues 667-678 (SSQGGQSVPVSQ) are compositionally biased toward low complexity. The span at 679-694 (RMEHGQEETHDIPCLS) shows a compositional bias: basic and acidic residues.

It belongs to the herpesviridae helicase family. Associates with the primase and the primase-associated factor to form the helicase-primase complex.

It localises to the host nucleus. Component of the helicase/primase complex. Unwinds the DNA at the replication forks and generates single-stranded DNA for both leading and lagging strand synthesis. The primase synthesizes short RNA primers on the lagging strand that the polymerase elongates using dNTPs. Possesses helicase-like motifs and therefore may act as the helicase subunit of the complex. In Human cytomegalovirus (strain AD169) (HHV-5), this protein is DNA replication helicase.